Consider the following 393-residue polypeptide: Heparan sulfate glucosamine 3-O-sulfotransferase 3A1 (393 aa).

At 1 to 24 (MAPSGPTGAQPSPAEPLSRSIFRK) the chain is on the cytoplasmic side. Residues 25–43 (FLLMLCSLLTSLYVFYCLA) form a helical; Signal-anchor for type II membrane protein membrane-spanning segment. Topologically, residues 44 to 393 (ERCPPGSGPV…MTGRDFGWDG (350 aa)) are lumenal. A disordered region spans residues 85 to 121 (QRRRRGRSGPGDSSDQEEQSPGLAAAPGGSGAGSSVA). 149 to 153 (KGGTR) contributes to the 3'-phosphoadenylyl sulfate binding site. Residues 171 to 177 (EPHFFDR) and 202 to 205 (KTPS) contribute to the substrate site. Arg-230 and Ser-238 together coordinate 3'-phosphoadenylyl sulfate. Residue Asn-260 is glycosylated (N-linked (GlcNAc...) asparagine). Position 270-271 (270-271 (WS)) interacts with substrate. An N-linked (GlcNAc...) asparagine glycan is attached at Asn-331. Cys-338 and Cys-350 are disulfide-bonded. 355 to 359 (KGRAH) provides a ligand contact to 3'-phosphoadenylyl sulfate.

The protein belongs to the sulfotransferase 1 family.

Its subcellular location is the golgi apparatus membrane. It carries out the reaction alpha-D-glucosaminyl-[heparan sulfate](n) + 3'-phosphoadenylyl sulfate = 3-sulfo-alpha-D-glucosaminyl-[heparan sulfate](n) + adenosine 3',5'-bisphosphate + H(+). In terms of biological role, sulfotransferase that utilizes 3'-phospho-5'-adenylyl sulfate (PAPS) to catalyze the transfer of a sulfo group to an N-unsubstituted glucosamine linked to a 2-O-sulfo iduronic acid unit on heparan sulfate. Catalyzes the O-sulfation of glucosamine in IdoUA2S-GlcNS and also in IdoUA2S-GlcNH2. Unlike HS3ST1/3-OST-1, does not convert non-anticoagulant heparan sulfate to anticoagulant heparan sulfate. The polypeptide is Heparan sulfate glucosamine 3-O-sulfotransferase 3A1 (Hs3st3a1) (Mus musculus (Mouse)).